The sequence spans 453 residues: uncharacterized protein (453 aa).

Residues 1 to 110 are Cytoplasmic-facing; that stretch reads MIQTQSTAIK…KAILRTFNHP (110 aa). The chain crosses the membrane as a helical span at residues 111 to 131; the sequence is IALTELQFLVSAVLCVGFASI. Topologically, residues 132-172 are lumenal; it reads VNLFRLPRLKHTKFSKALNSFPDGILPEYLDGNFRSSILHK. A helical transmembrane segment spans residues 173–193; that stretch reads FLVPSKLVLMTTFPMGIFQFI. Over 194 to 201 the chain is Cytoplasmic; the sequence is GHITSHKA. A helical membrane pass occupies residues 202-222; sequence VSMIPVSLVHSVKALSPIITV. At 223–234 the chain is on the lumenal side; the sequence is GYYKFFEHRYYN. Residues 235–255 traverse the membrane as a helical segment; that stretch reads SMTYYTLLLLIFGVMTTCWST. The Cytoplasmic portion of the chain corresponds to 256–269; it reads HGSKRASDNKSGSS. Residues 270 to 290 form a helical membrane-spanning segment; sequence LIGLLFAFISMIIFVAQNIFA. The Lumenal portion of the chain corresponds to 291 to 332; that stretch reads KNILTIRRKVGILPSSSTDDVTSKEGQPSLDKTRFSPLQVDK. A helical membrane pass occupies residues 333–353; sequence ITILFYCSCIGFSLTLLPFLT. At 354-371 the chain is on the cytoplasmic side; sequence GELMHGGSVINDLTLETV. A helical membrane pass occupies residues 372-392; it reads ALVAIHGIAHFFQAMLAFQLI. Topologically, residues 393 to 413 are lumenal; sequence GLLSSINYSVANIMKRIVVIS. Residues 414 to 434 traverse the membrane as a helical segment; the sequence is VALFWETKLNFFQVFGVILTI. The Cytoplasmic segment spans residues 435-453; that stretch reads AGLYGYDKWGLSKKDGRQA.

This sequence belongs to the TPT transporter family.

The protein localises to the membrane. Its function is as follows. Able to suppress the functional loss of YPT1. May form a channel. Protein SLY41 is not essential for cell viability. The SLY41 gene is a multicopy suppressor. This is an uncharacterized protein from Saccharomyces cerevisiae (strain ATCC 204508 / S288c) (Baker's yeast).